The primary structure comprises 1392 residues: DNA-directed RNA polymerase subunit beta (1392 aa).

Belongs to the RNA polymerase beta chain family. The RNAP catalytic core consists of 2 alpha, 1 beta, 1 beta' and 1 omega subunit. When a sigma factor is associated with the core the holoenzyme is formed, which can initiate transcription.

The catalysed reaction is RNA(n) + a ribonucleoside 5'-triphosphate = RNA(n+1) + diphosphate. Functionally, DNA-dependent RNA polymerase catalyzes the transcription of DNA into RNA using the four ribonucleoside triphosphates as substrates. The protein is DNA-directed RNA polymerase subunit beta of Neisseria meningitidis serogroup A / serotype 4A (strain DSM 15465 / Z2491).